A 296-amino-acid polypeptide reads, in one-letter code: Protoheme IX farnesyltransferase (296 aa).

9 helical membrane passes run 9–29, 36–56, 75–95, 99–119, 133–153, 163–183, 209–229, 234–254, and 265–285; these read VTKPGIIFGNLISVIGGFLLA, YPLFLSTLLGVSLVVASGCVF, VLVKGLIDPKVSLIYASVLGI, LLLYVAANALAMMLAVIGFVI, VYGTLIGSLSGAAPPVIGYCA, LILLLIFSLWQMPHSYAIAIF, ITLYILAFMVATLMLTLSGYA, LVVAAAVSVWWLGMALRGYKA, and FVFSIIAITSLSVMMSVDFNV.

It belongs to the UbiA prenyltransferase family. Protoheme IX farnesyltransferase subfamily.

The protein localises to the cell inner membrane. It catalyses the reaction heme b + (2E,6E)-farnesyl diphosphate + H2O = Fe(II)-heme o + diphosphate. It participates in porphyrin-containing compound metabolism; heme O biosynthesis; heme O from protoheme: step 1/1. In terms of biological role, converts heme B (protoheme IX) to heme O by substitution of the vinyl group on carbon 2 of heme B porphyrin ring with a hydroxyethyl farnesyl side group. In Yersinia pestis bv. Antiqua (strain Antiqua), this protein is Protoheme IX farnesyltransferase.